A 493-amino-acid chain; its full sequence is Glutamyl-tRNA(Gln) amidotransferase subunit A (493 aa).

Active-site charge relay system residues include Lys-81 and Ser-156. Residue Ser-180 is the Acyl-ester intermediate of the active site.

Belongs to the amidase family. GatA subfamily. Heterotrimer of A, B and C subunits.

It catalyses the reaction L-glutamyl-tRNA(Gln) + L-glutamine + ATP + H2O = L-glutaminyl-tRNA(Gln) + L-glutamate + ADP + phosphate + H(+). Allows the formation of correctly charged Gln-tRNA(Gln) through the transamidation of misacylated Glu-tRNA(Gln) in organisms which lack glutaminyl-tRNA synthetase. The reaction takes place in the presence of glutamine and ATP through an activated gamma-phospho-Glu-tRNA(Gln). The polypeptide is Glutamyl-tRNA(Gln) amidotransferase subunit A (Mycolicibacterium paratuberculosis (strain ATCC BAA-968 / K-10) (Mycobacterium paratuberculosis)).